The primary structure comprises 152 residues: Large ribosomal subunit protein bL9 (152 aa).

It belongs to the bacterial ribosomal protein bL9 family.

Its function is as follows. Binds to the 23S rRNA. The sequence is that of Large ribosomal subunit protein bL9 from Mycobacterium bovis (strain ATCC BAA-935 / AF2122/97).